A 347-amino-acid chain; its full sequence is Haptoglobin (347 aa).

Residues 1–18 (MSDLGAVVALLLWGQLFA) form the signal peptide. The Sushi domain maps to 31-88 (DGCPKPPMIANGYVEHLVRYQCKNYYRLRTEGDGVYTLNNEKQWTNKAVGDKLPECEA). Intrachain disulfides connect cysteine 52–cysteine 86 and cysteine 90–cysteine 207. The interval 103 to 347 (ILGGHLDAKG…DWVQKTIAEN (245 aa)) is serine protease. Asparagine 125, asparagine 148, asparagine 152, asparagine 182, and asparagine 232 each carry an N-linked (GlcNAc...) asparagine glycan. 2 disulfide bridges follow: cysteine 250–cysteine 281 and cysteine 292–cysteine 322. The interaction with CD163 stretch occupies residues 259–264 (VPEKKT).

This sequence belongs to the peptidase S1 family. As to quaternary structure, tetramer of two alpha and two beta chains; disulfide-linked. The hemoglobin/haptoglobin complex is composed of a haptoglobin dimer bound to two hemoglobin alpha-beta dimers. Interacts with CD163. Interacts with ERGIC3. Expressed by the liver and secreted in plasma.

The protein resides in the secreted. Functionally, as a result of hemolysis, hemoglobin is found to accumulate in the kidney and is secreted in the urine. Haptoglobin captures, and combines with free plasma hemoglobin to allow hepatic recycling of heme iron and to prevent kidney damage. Haptoglobin also acts as an antioxidant, has antibacterial activity and plays a role in modulating many aspects of the acute phase response. Hemoglobin/haptoglobin complexes are rapidly cleared by the macrophage CD163 scavenger receptor expressed on the surface of liver Kupfer cells through an endocytic lysosomal degradation pathway. The protein is Haptoglobin (HP) of Papio hamadryas (Hamadryas baboon).